A 213-amino-acid polypeptide reads, in one-letter code: Macrodontain-1 (213 aa).

Cystine bridges form between Cys-23-Cys-63, Cys-57-Cys-96, and Cys-153-Cys-201. Cys-26 is an active-site residue. Catalysis depends on residues His-159 and Asn-176.

In terms of assembly, monomer. As to expression, fruits.

Its activity is regulated as follows. Inhibited by the general cysteine protease inhibitor E64 (L-trans-epoxysuccinyl-leucylamide-(4-guanido)-butane). Its function is as follows. Cysteine protease that catalyzes the preferential cleavage: Ala-|-Xaa &gt; Gln-|-Xaa &gt; Tyr-Xaa &gt;&gt; Leu-|-Xaa &gt; Gly-|-Xaa. Hydrolyzes the synthetic peptide substrate Bz-Phe-Val-Arg-pNA. The protein is Macrodontain-1 of Ananas macrodontes (False pineapple).